A 398-amino-acid chain; its full sequence is Phosphoglycerate kinase (398 aa).

Substrate is bound by residues 22–24, Arg-38, 61–64, Arg-120, and Arg-153; these read DFN and HLGR. Residues Lys-206, Gly-297, Glu-328, and 354 to 357 contribute to the ATP site; that span reads GGDT.

Belongs to the phosphoglycerate kinase family. In terms of assembly, monomer.

The protein localises to the cytoplasm. The enzyme catalyses (2R)-3-phosphoglycerate + ATP = (2R)-3-phospho-glyceroyl phosphate + ADP. It participates in carbohydrate degradation; glycolysis; pyruvate from D-glyceraldehyde 3-phosphate: step 2/5. This chain is Phosphoglycerate kinase, found in Nautilia profundicola (strain ATCC BAA-1463 / DSM 18972 / AmH).